The sequence spans 391 residues: UPF0328 protein ECU06_1650 (391 aa).

Belongs to the UPF0328 family.

This is UPF0328 protein ECU06_1650 from Encephalitozoon cuniculi (strain GB-M1) (Microsporidian parasite).